A 241-amino-acid polypeptide reads, in one-letter code: Triosephosphate isomerase (241 aa).

9–11 (NWK) contributes to the substrate binding site. The Electrophile role is filled by His96. Catalysis depends on Glu165, which acts as the Proton acceptor. Residues Gly171, Ser204, and 225-226 (GG) contribute to the substrate site.

Belongs to the triosephosphate isomerase family. In terms of assembly, homodimer.

The protein resides in the cytoplasm. It catalyses the reaction D-glyceraldehyde 3-phosphate = dihydroxyacetone phosphate. It functions in the pathway carbohydrate biosynthesis; gluconeogenesis. The protein operates within carbohydrate degradation; glycolysis; D-glyceraldehyde 3-phosphate from glycerone phosphate: step 1/1. Involved in the gluconeogenesis. Catalyzes stereospecifically the conversion of dihydroxyacetone phosphate (DHAP) to D-glyceraldehyde-3-phosphate (G3P). This Prochlorococcus marinus (strain MIT 9515) protein is Triosephosphate isomerase.